The chain runs to 620 residues: MAU2 chromatid cohesion factor homolog (620 aa).

3 TPR repeats span residues 90-123 (FDTASLLAQLYQQQEQSSLAKPVLRKAIELSQHN), 445-478 (GSFYYVQGLNAFHKSSFHEAKRFLRETLKMANAE), and 485-518 (SCSLVLLSHVFLSIGNSKESMNMVTPAMQLASKI).

It belongs to the SCC4/mau-2 family. In terms of assembly, component of the cohesin loading complex.

The protein localises to the nucleus. Its subcellular location is the nucleoplasm. Its function is as follows. Required for association of the cohesin complex with chromatin during interphase. Plays a role in sister chromatid cohesion and normal progression through prometaphase. The protein is MAU2 chromatid cohesion factor homolog of Aedes aegypti (Yellowfever mosquito).